A 94-amino-acid polypeptide reads, in one-letter code: Mitochondrial import receptor subunit TOM9-1 (94 aa).

Residues 1–48 (MAPKKIGAGKGDSSILAKISNYDIVSQGRRAACDAVYVSKKLLKSTGK) lie on the Cytoplasmic side of the membrane. Residues 49-66 (AAWIAGTTFLILAVPLIL) form a helical membrane-spanning segment. The Mitochondrial intermembrane segment spans residues 67-94 (ELEQDHRLGEIDFEQASLLGTPPVGAML).

It belongs to the Tom22 family. Forms part of the preprotein translocase complex of the outer mitochondrial membrane (TOM complex) which consists of at least 6 different proteins (TOM5, TOM6, TOM7, TOM20, TOM22/TOM9 and TOM40). In terms of tissue distribution, expressed in roots, flowers, young cotyledons and leaves.

The protein resides in the mitochondrion outer membrane. Its function is as follows. Central component of the receptor complex responsible for the recognition and translocation of cytosolically synthesized mitochondrial preproteins. Together with TOM20 functions as the transit peptide receptor at the surface of the mitochondrion outer membrane and facilitates the movement of preproteins into the translocation pore. This chain is Mitochondrial import receptor subunit TOM9-1 (TOM9-1), found in Arabidopsis thaliana (Mouse-ear cress).